The following is a 145-amino-acid chain: Transcriptional anti-antiactivator ExsC (145 aa).

As to quaternary structure, homodimer. Interacts with ExsE. Interacts directly with ExsD to form a heterotetrameric complex.

The protein resides in the cytoplasm. With respect to regulation, in the absence of inducing signals, ExsE interacts with and inhibits ExsC activity. In terms of biological role, part of the regulatory cascade that plays a role in the transcriptional regulation of the type III secretion system (T3SS). Interacts with antiactivator ExsD to inhibit its activity leading to ExsA-mediated transcription. This is Transcriptional anti-antiactivator ExsC (exsC) from Pseudomonas aeruginosa (strain ATCC 15692 / DSM 22644 / CIP 104116 / JCM 14847 / LMG 12228 / 1C / PRS 101 / PAO1).